A 208-amino-acid chain; its full sequence is A-type ATP synthase subunit E (208 aa).

Residues 37–57 (DAEKTAEAEKNKILDNGKKQS) form a disordered region.

The protein belongs to the V-ATPase E subunit family. Has multiple subunits with at least A(3), B(3), C, D, E, F, H, I and proteolipid K(x).

The protein resides in the cell membrane. Functionally, component of the A-type ATP synthase that produces ATP from ADP in the presence of a proton gradient across the membrane. This Methanobrevibacter smithii (strain ATCC 35061 / DSM 861 / OCM 144 / PS) protein is A-type ATP synthase subunit E.